The primary structure comprises 471 residues: Protoheme IX farnesyltransferase, mitochondrial (471 aa).

Residues 1–60 (MLLSNVAVNRTVVHTQLVSGSRSALHALSRTSHSVPVTHTHQRRHIFSHKRRLSSSTLAI) constitute a mitochondrion transit peptide. A run of 6 helical transmembrane segments spans residues 188–208 (AVSLTNLLFLTVGTALCSGSA), 247–267 (ITGTVGTAALYFGVNPTVAIL), 287–307 (IINTWVGAVVGAIPPLMGWAA), 312–332 (LLHPGAWCLAGLLYAWQFPHF), 368–388 (LLMFPLCVGLSYYNVTDWWFV), and 430–450 (KLFWGSVVHLPGVLLLAMIHK).

This sequence belongs to the UbiA prenyltransferase family.

It localises to the mitochondrion membrane. The catalysed reaction is heme b + (2E,6E)-farnesyl diphosphate + H2O = Fe(II)-heme o + diphosphate. In terms of biological role, converts protoheme IX and farnesyl diphosphate to heme O. The protein is Protoheme IX farnesyltransferase, mitochondrial (COX10) of Yarrowia lipolytica (strain CLIB 122 / E 150) (Yeast).